A 241-amino-acid chain; its full sequence is tRNA pseudouridine synthase A (241 aa).

D52 functions as the Nucleophile in the catalytic mechanism. Y110 is a substrate binding site.

This sequence belongs to the tRNA pseudouridine synthase TruA family. Homodimer.

The enzyme catalyses uridine(38/39/40) in tRNA = pseudouridine(38/39/40) in tRNA. In terms of biological role, formation of pseudouridine at positions 38, 39 and 40 in the anticodon stem and loop of transfer RNAs. This is tRNA pseudouridine synthase A from Aquifex aeolicus (strain VF5).